Reading from the N-terminus, the 376-residue chain is Alpha-2,8-sialyltransferase 8E (376 aa).

The Cytoplasmic portion of the chain corresponds to 1-17 (MRYADPSANRDLLGSRT). A helical; Signal-anchor for type II membrane protein transmembrane segment spans residues 18–38 (LLFIFICAFALVTLLQQILYG). The Lumenal segment spans residues 39–376 (RNYIKRYFEF…RVHTGTCSCC (338 aa)). N-linked (GlcNAc...) asparagine glycosylation is found at N56 and N96. 2 disulfides stabilise this stretch: C164–C313 and C178–C373. Substrate-binding positions include N192 and 214–216 (NPS). N-linked (GlcNAc...) asparagine glycosylation is found at N241 and N284. Residue 300 to 302 (STG) participates in substrate binding. H348 (proton donor/acceptor) is an active-site residue.

Belongs to the glycosyltransferase 29 family. As to expression, expressed in fetal and adult brain, adult heart and skeletal muscle. In terms of tissue distribution, expressed in fetal and adult brain, not detected in adult heart and skeletal muscle.

The protein resides in the golgi apparatus membrane. It catalyses the reaction a ganglioside GT1b (d18:1(4E)) + CMP-N-acetyl-beta-neuraminate = a ganglioside GQ1b (d18:1(4E)) + CMP + H(+). The enzyme catalyses a ganglioside GD3 (d18:1(4E)) + CMP-N-acetyl-beta-neuraminate = a ganglioside GT3 (d18:1(4E)) + CMP + H(+). The catalysed reaction is a ganglioside GD1a (d18:1(4E)) + CMP-N-acetyl-beta-neuraminate = a ganglioside GT1a (d18:1(4E)) + CMP + H(+). It carries out the reaction a ganglioside GM1b (d18:1(4E)) + CMP-N-acetyl-beta-neuraminate = a ganglioside GD1c (d18:1(4E)) + CMP + H(+). It catalyses the reaction a ganglioside GQ1c (d18:1(4E)) + CMP-N-acetyl-beta-neuraminate = a ganglioside GP1c (d18:1(4E)) + CMP + H(+). It functions in the pathway protein modification; protein glycosylation. Its function is as follows. Involved in the synthesis of gangliosides GD1c, GT1a, GQ1b, GP1c and GT3 from GD1a, GT1b, GM1b and GD3 respectively. In Homo sapiens (Human), this protein is Alpha-2,8-sialyltransferase 8E.